The primary structure comprises 886 residues: Alanine--tRNA ligase (886 aa).

Zn(2+) contacts are provided by H564, H568, C676, and H680.

This sequence belongs to the class-II aminoacyl-tRNA synthetase family. Requires Zn(2+) as cofactor.

Its subcellular location is the cytoplasm. It carries out the reaction tRNA(Ala) + L-alanine + ATP = L-alanyl-tRNA(Ala) + AMP + diphosphate. Functionally, catalyzes the attachment of alanine to tRNA(Ala) in a two-step reaction: alanine is first activated by ATP to form Ala-AMP and then transferred to the acceptor end of tRNA(Ala). Also edits incorrectly charged Ser-tRNA(Ala) and Gly-tRNA(Ala) via its editing domain. This Methylobacterium sp. (strain 4-46) protein is Alanine--tRNA ligase.